Consider the following 153-residue polypeptide: UPF0260 protein Plav_0898 (153 aa).

It belongs to the UPF0260 family.

In Parvibaculum lavamentivorans (strain DS-1 / DSM 13023 / NCIMB 13966), this protein is UPF0260 protein Plav_0898.